Reading from the N-terminus, the 147-residue chain is MAAQRLGKRVLSKLQSPSRARGPGGSPGGLQKRHARVTVKYDRRELQRRLDVEKWIDGRLEELYRGREADMPDEVNIDELLELESEEERSRKIQGLLKSCTNPTENFVQELLVKLRGLHKQPGLRQPSPSGDGSLSPRQDRARTAPP.

Basic residues predominate over residues 1-11; it reads MAAQRLGKRVL. A disordered region spans residues 1–37; sequence MAAQRLGKRVLSKLQSPSRARGPGGSPGGLQKRHARV. Position 26 is a phosphoserine (Ser-26). The interval 35-120 is inhibitory; that stretch reads ARVTVKYDRR…LLVKLRGLHK (86 aa). Thr-38 carries the post-translational modification Phosphothreonine. The disordered stretch occupies residues 118–147; it reads LHKQPGLRQPSPSGDGSLSPRQDRARTAPP. Positions 127–137 are enriched in polar residues; sequence PSPSGDGSLSP. 3 positions are modified to phosphoserine: Ser-128, Ser-134, and Ser-136. A compositionally biased stretch (basic and acidic residues) spans 138 to 147; sequence RQDRARTAPP.

Belongs to the PP1 inhibitor family. Post-translationally, phosphorylation of Thr-38 induces a conformation change. Detected in aorta smooth muscle and bladder.

The protein resides in the cytoplasm. Its function is as follows. Inhibitor of PPP1CA. Has over 1000-fold higher inhibitory activity when phosphorylated, creating a molecular switch for regulating the phosphorylation status of PPP1CA substrates and smooth muscle contraction. The chain is Protein phosphatase 1 regulatory subunit 14A (CPI17) from Sus scrofa (Pig).